We begin with the raw amino-acid sequence, 446 residues long: Nuclear envelope morphology protein 1 (446 aa).

Residues V53–K80 are disordered. The segment covering Q56–N75 has biased composition (basic and acidic residues). A helical membrane pass occupies residues I87–L103. The segment at H132–L168 is disordered. The segment covering G139–D156 has biased composition (polar residues). The FCP1 homology domain occupies N247–M424.

Belongs to the Dullard family. In terms of assembly, component of the NEM1-SPO7 complex.

Its subcellular location is the endoplasmic reticulum membrane. The protein localises to the nucleus membrane. The catalysed reaction is O-phospho-L-seryl-[protein] + H2O = L-seryl-[protein] + phosphate. It catalyses the reaction O-phospho-L-threonyl-[protein] + H2O = L-threonyl-[protein] + phosphate. Its function is as follows. Catalytic component of the NEM1-SPO7 complex which acts as a phosphatase and dephosphorylates the phosphatidic acid phosphohydrolase PAH1. Essential for the formation of a spherical nucleus and meiotic division. The NEM1-SPOo7 protein phosphatase is required for efficient mitophagy under prolonged respiration, as well as for reticulophagy and pexophagy. This is Nuclear envelope morphology protein 1 (NEM1) from Saccharomyces cerevisiae (strain ATCC 204508 / S288c) (Baker's yeast).